Consider the following 239-residue polypeptide: Purine nucleoside phosphorylase DeoD-type (239 aa).

A purine D-ribonucleoside is bound at residue His-5. Phosphate-binding positions include Gly-21, Arg-25, Arg-44, and 88–91; that span reads RVGS. A purine D-ribonucleoside-binding positions include 180–182 and 204–205; these read EME and SD. Asp-205 serves as the catalytic Proton donor.

This sequence belongs to the PNP/UDP phosphorylase family. In terms of assembly, homohexamer; trimer of homodimers.

It catalyses the reaction a purine D-ribonucleoside + phosphate = a purine nucleobase + alpha-D-ribose 1-phosphate. It carries out the reaction a purine 2'-deoxy-D-ribonucleoside + phosphate = a purine nucleobase + 2-deoxy-alpha-D-ribose 1-phosphate. Catalyzes the reversible phosphorolytic breakdown of the N-glycosidic bond in the beta-(deoxy)ribonucleoside molecules, with the formation of the corresponding free purine bases and pentose-1-phosphate. The chain is Purine nucleoside phosphorylase DeoD-type from Erwinia tasmaniensis (strain DSM 17950 / CFBP 7177 / CIP 109463 / NCPPB 4357 / Et1/99).